A 365-amino-acid polypeptide reads, in one-letter code: Chorismate synthase (365 aa).

An NADP(+)-binding site is contributed by arginine 47. Residues 124–126, glycine 287, 302–306, and arginine 328 each bind FMN; these read RAS and KPTAT.

It belongs to the chorismate synthase family. Homotetramer. Requires FMNH2 as cofactor.

It catalyses the reaction 5-O-(1-carboxyvinyl)-3-phosphoshikimate = chorismate + phosphate. Its pathway is metabolic intermediate biosynthesis; chorismate biosynthesis; chorismate from D-erythrose 4-phosphate and phosphoenolpyruvate: step 7/7. In terms of biological role, catalyzes the anti-1,4-elimination of the C-3 phosphate and the C-6 proR hydrogen from 5-enolpyruvylshikimate-3-phosphate (EPSP) to yield chorismate, which is the branch point compound that serves as the starting substrate for the three terminal pathways of aromatic amino acid biosynthesis. This reaction introduces a second double bond into the aromatic ring system. This is Chorismate synthase from Prochlorococcus marinus (strain MIT 9312).